The primary structure comprises 309 residues: tRNA uridine(34) hydroxylase (309 aa).

In terms of domain architecture, Rhodanese spans 130–224 (SDPDTIVIDT…YLEEVPQEES (95 aa)). C184 acts as the Cysteine persulfide intermediate in catalysis.

Belongs to the TrhO family.

The enzyme catalyses uridine(34) in tRNA + AH2 + O2 = 5-hydroxyuridine(34) in tRNA + A + H2O. In terms of biological role, catalyzes oxygen-dependent 5-hydroxyuridine (ho5U) modification at position 34 in tRNAs. This is tRNA uridine(34) hydroxylase from Rhizobium johnstonii (strain DSM 114642 / LMG 32736 / 3841) (Rhizobium leguminosarum bv. viciae).